Here is a 46-residue protein sequence, read N- to C-terminus: Sperm protamine P1 (46 aa).

Belongs to the protamine P1 family. In terms of tissue distribution, testis.

The protein resides in the nucleus. It localises to the chromosome. Its function is as follows. Protamines substitute for histones in the chromatin of sperm during the haploid phase of spermatogenesis. They compact sperm DNA into a highly condensed, stable and inactive complex. In Glauconycteris beatrix (Beatrix's bat), this protein is Sperm protamine P1 (PRM1).